Here is an 87-residue protein sequence, read N- to C-terminus: Putative regulatory protein BCG9842_B1272 (87 aa).

It belongs to the RemA family.

This chain is Putative regulatory protein BCG9842_B1272, found in Bacillus cereus (strain G9842).